The primary structure comprises 571 residues: Phosphoribosylaminoimidazole carboxylase (571 aa).

Serine 37 carries the post-translational modification Phosphoserine. Positions 110 to 298 (KEHLIKNGIA…QFEAHLRSIL (189 aa)) constitute an ATP-grasp domain. 138–193 (GRDLGFPFVLKSRTLAYDGRGNFVVKNKEMIPEALEVLKDRPLYAEKWAPFTKELA) is a binding site for ATP.

The protein in the C-terminal section; belongs to the AIR carboxylase family. Class I subfamily.

It carries out the reaction 5-amino-1-(5-phospho-D-ribosyl)imidazole-4-carboxylate + H(+) = 5-amino-1-(5-phospho-beta-D-ribosyl)imidazole + CO2. The protein operates within purine metabolism; IMP biosynthesis via de novo pathway; 5-amino-1-(5-phospho-D-ribosyl)imidazole-4-carboxylate from 5-amino-1-(5-phospho-D-ribosyl)imidazole (carboxylase route): step 1/1. The sequence is that of Phosphoribosylaminoimidazole carboxylase (ADE2) from Saccharomyces cerevisiae (strain ATCC 204508 / S288c) (Baker's yeast).